Consider the following 268-residue polypeptide: MRASSKKKVLVFDSGVGGLSVFQEIHRLLPHMDYLYLFDNEAYPYGELDQDVLITRVNKLVAALVEEHQADIVVIACNTASTIVLPSLRANLSIPVVGVVPAIKPASLLASQGVGLIATPATVTRQYTHELIRDFAQGKPVELLGSTRLVDMAEEKLRGESISLSELESILLPLRNKVDVAVLGCTHFPLIKEEIHQALGGEVTLVDSGEAIARRVKALLLNAMKQESREEGSKKIYASAPPWQEDALNTCLANLGFNPVQVYRLPGV.

Residues D13–S14 and Y45–G46 each bind substrate. Catalysis depends on C77, which acts as the Proton donor/acceptor. N78–T79 provides a ligand contact to substrate. Residue C185 is the Proton donor/acceptor of the active site. Substrate is bound at residue T186–H187.

This sequence belongs to the aspartate/glutamate racemases family.

The enzyme catalyses L-glutamate = D-glutamate. It participates in cell wall biogenesis; peptidoglycan biosynthesis. Functionally, provides the (R)-glutamate required for cell wall biosynthesis. This Vibrio campbellii (strain ATCC BAA-1116) protein is Glutamate racemase.